Here is a 156-residue protein sequence, read N- to C-terminus: Crossover junction endodeoxyribonuclease RuvC (156 aa).

Residues Asp-7, Glu-66, and Asp-138 contribute to the active site. Residues Asp-7, Glu-66, and Asp-138 each coordinate Mg(2+).

It belongs to the RuvC family. In terms of assembly, homodimer which binds Holliday junction (HJ) DNA. The HJ becomes 2-fold symmetrical on binding to RuvC with unstacked arms; it has a different conformation from HJ DNA in complex with RuvA. In the full resolvosome a probable DNA-RuvA(4)-RuvB(12)-RuvC(2) complex forms which resolves the HJ. It depends on Mg(2+) as a cofactor.

Its subcellular location is the cytoplasm. The catalysed reaction is Endonucleolytic cleavage at a junction such as a reciprocal single-stranded crossover between two homologous DNA duplexes (Holliday junction).. Its function is as follows. The RuvA-RuvB-RuvC complex processes Holliday junction (HJ) DNA during genetic recombination and DNA repair. Endonuclease that resolves HJ intermediates. Cleaves cruciform DNA by making single-stranded nicks across the HJ at symmetrical positions within the homologous arms, yielding a 5'-phosphate and a 3'-hydroxyl group; requires a central core of homology in the junction. The consensus cleavage sequence is 5'-(A/T)TT(C/G)-3'. Cleavage occurs on the 3'-side of the TT dinucleotide at the point of strand exchange. HJ branch migration catalyzed by RuvA-RuvB allows RuvC to scan DNA until it finds its consensus sequence, where it cleaves and resolves the cruciform DNA. The chain is Crossover junction endodeoxyribonuclease RuvC from Ehrlichia chaffeensis (strain ATCC CRL-10679 / Arkansas).